Reading from the N-terminus, the 293-residue chain is tRNA pseudouridine synthase B (293 aa).

Asp38 (nucleophile) is an active-site residue.

Belongs to the pseudouridine synthase TruB family. Type 1 subfamily.

The catalysed reaction is uridine(55) in tRNA = pseudouridine(55) in tRNA. Its function is as follows. Responsible for synthesis of pseudouridine from uracil-55 in the psi GC loop of transfer RNAs. The protein is tRNA pseudouridine synthase B of Nostoc sp. (strain PCC 7120 / SAG 25.82 / UTEX 2576).